We begin with the raw amino-acid sequence, 238 residues long: Urease accessory protein UreF (238 aa).

The protein belongs to the UreF family. In terms of assembly, ureD, UreF and UreG form a complex that acts as a GTP-hydrolysis-dependent molecular chaperone, activating the urease apoprotein by helping to assemble the nickel containing metallocenter of UreC. The UreE protein probably delivers the nickel.

Its subcellular location is the cytoplasm. In terms of biological role, required for maturation of urease via the functional incorporation of the urease nickel metallocenter. The sequence is that of Urease accessory protein UreF from Rhodopseudomonas palustris (strain BisA53).